The following is a 703-amino-acid chain: Epidermal growth factor receptor (703 aa).

An N-terminal signal peptide occupies residues 1–30 (MGVRSPLSASGPRGAAVLVLLLLGVALCSA). The Extracellular portion of the chain corresponds to 31-654 (VEEKKVCQGT…GCPNGSKTPS (624 aa)). A disulfide bridge connects residues Cys37 and Cys64. 3 N-linked (GlcNAc...) asparagine glycosylation sites follow: Asn134, Asn190, and Asn200. 13 disulfide bridges follow: Cys164-Cys194, Cys197-Cys206, Cys201-Cys214, Cys222-Cys230, Cys226-Cys238, Cys239-Cys247, Cys243-Cys255, Cys258-Cys267, Cys271-Cys298, Cys302-Cys314, Cys318-Cys333, Cys336-Cys340, and Cys344-Cys369. Asn359, Asn368, and Asn420 each carry an N-linked (GlcNAc...) asparagine glycan. 11 disulfides stabilise this stretch: Cys477–Cys506, Cys513–Cys522, Cys517–Cys530, Cys533–Cys542, Cys546–Cys562, Cys565–Cys581, Cys569–Cys589, Cys592–Cys601, Cys605–Cys627, Cys630–Cys638, and Cys634–Cys646. Residues Asn573 and Asn578 are each glycosylated (N-linked (GlcNAc...) asparagine). Asn613 and Asn633 each carry an N-linked (GlcNAc...) asparagine glycan. A glycan (N-linked (GlcNAc...) asparagine) is linked at Asn648. Residues 655–667 (IAAGVVGGLLCLV) traverse the membrane as a helical segment. Residues 668-703 (VVGLGIGLYLRRRHIVRKRTLRRLLQERELVEPLTP) lie on the Cytoplasmic side of the membrane. Phosphothreonine occurs at positions 687 and 702.

It belongs to the protein kinase superfamily. Tyr protein kinase family. EGF receptor subfamily. Binding of the ligand triggers homo- and/or heterodimerization of the receptor triggering its autophosphorylation. Post-translationally, phosphorylated. Autophosphorylates.

The protein localises to the cell membrane. It localises to the endoplasmic reticulum membrane. The protein resides in the golgi apparatus membrane. It is found in the nucleus membrane. Its subcellular location is the endosome. The protein localises to the endosome membrane. It localises to the nucleus. The catalysed reaction is L-tyrosyl-[protein] + ATP = O-phospho-L-tyrosyl-[protein] + ADP + H(+). Its activity is regulated as follows. Endocytosis and inhibition of the activated EGFR by phosphatases constitute immediate regulatory mechanisms. Moreover, inducible feedback inhibitors may constitute alternative regulatory mechanisms for the EGFR signaling. Functionally, receptor tyrosine kinase binding ligands of the EGF family and activating several signaling cascades to convert extracellular cues into appropriate cellular responses. Known ligands include EGF and TGFA/TGF-alpha. Ligand binding triggers receptor homo- and/or heterodimerization and autophosphorylation on key cytoplasmic residues. The phosphorylated receptor recruits adapter proteins like GRB2 which in turn activates complex downstream signaling cascades. Activates at least 4 major downstream signaling cascades including the RAS-RAF-MEK-ERK, PI3 kinase-AKT, PLCgamma-PKC and STATs modules. May also activate the NF-kappa-B signaling cascade. The protein is Epidermal growth factor receptor (EGFR) of Gallus gallus (Chicken).